Consider the following 660-residue polypeptide: Bifunctional polymyxin resistance protein ArnA (660 aa).

The tract at residues 1-304 is formyltransferase ArnAFT; it reads MKAVIFAYHD…TLGLVAGARL (304 aa). His104 functions as the Proton donor; for formyltransferase activity in the catalytic mechanism. (6R)-10-formyltetrahydrofolate-binding positions include Arg114 and 136–140; that span reads VKRAD. A dehydrogenase ArnADH region spans residues 314–660; the sequence is RRIRVLILGV…RSVDVAERAS (347 aa). NAD(+)-binding positions include Asp347 and 368–369; that span reads DI. UDP-alpha-D-glucuronate contacts are provided by residues Ala393, Tyr398, and 432-433; that span reads TS. The Proton acceptor; for decarboxylase activity role is filled by Glu434. UDP-alpha-D-glucuronate-binding positions include Arg460, Asn492, 526–535, and Tyr613; that span reads KLIDGGQQKR. The active-site Proton donor; for decarboxylase activity is the Arg619.

This sequence in the N-terminal section; belongs to the Fmt family. UDP-L-Ara4N formyltransferase subfamily. It in the C-terminal section; belongs to the NAD(P)-dependent epimerase/dehydratase family. UDP-glucuronic acid decarboxylase subfamily. In terms of assembly, homohexamer, formed by a dimer of trimers.

The enzyme catalyses UDP-alpha-D-glucuronate + NAD(+) = UDP-beta-L-threo-pentopyranos-4-ulose + CO2 + NADH. It carries out the reaction UDP-4-amino-4-deoxy-beta-L-arabinose + (6R)-10-formyltetrahydrofolate = UDP-4-deoxy-4-formamido-beta-L-arabinose + (6S)-5,6,7,8-tetrahydrofolate + H(+). The protein operates within nucleotide-sugar biosynthesis; UDP-4-deoxy-4-formamido-beta-L-arabinose biosynthesis; UDP-4-deoxy-4-formamido-beta-L-arabinose from UDP-alpha-D-glucuronate: step 1/3. It functions in the pathway nucleotide-sugar biosynthesis; UDP-4-deoxy-4-formamido-beta-L-arabinose biosynthesis; UDP-4-deoxy-4-formamido-beta-L-arabinose from UDP-alpha-D-glucuronate: step 3/3. Its pathway is bacterial outer membrane biogenesis; lipopolysaccharide biosynthesis. Its function is as follows. Bifunctional enzyme that catalyzes the oxidative decarboxylation of UDP-glucuronic acid (UDP-GlcUA) to UDP-4-keto-arabinose (UDP-Ara4O) and the addition of a formyl group to UDP-4-amino-4-deoxy-L-arabinose (UDP-L-Ara4N) to form UDP-L-4-formamido-arabinose (UDP-L-Ara4FN). The modified arabinose is attached to lipid A and is required for resistance to polymyxin and cationic antimicrobial peptides. The polypeptide is Bifunctional polymyxin resistance protein ArnA (Salmonella choleraesuis (strain SC-B67)).